The chain runs to 602 residues: CDPK-related protein kinase (602 aa).

The tract at residues 1–59 is disordered; it reads MGICVSKPSPEPDLHNHHTSIPVNDTSLPPQDNSIPPKDIAIPAQDNNKPPGKKSPFLP. The span at 19 to 34 shows a compositional bias: polar residues; it reads TSIPVNDTSLPPQDNS. 3 consecutive repeat copies span residues 20–26, 27–33, and 34–40. A 3 X 7 AA tandem repeats of S-[LI]-P-X-X-D-X region spans residues 20–40; that stretch reads SIPVNDTSLPPQDNSIPPKDI. Positions 148 to 410 constitute a Protein kinase domain; sequence FEVGEEVGRG…AAQALCHSWI (263 aa). ATP-binding positions include 154 to 162 and lysine 180; that span reads VGRGHFGYT. Catalysis depends on aspartate 276, which acts as the Proton acceptor. 4 consecutive EF-hand domains span residues 451-486, 487-527, 528-563, and 564-602; these read VDEL…RNST, DAMK…LEAL, DRWE…LGPS, and IPVH…AKAQ.

The protein belongs to the protein kinase superfamily. CAMK Ser/Thr protein kinase family. CaMK subfamily.

It carries out the reaction L-seryl-[protein] + ATP = O-phospho-L-seryl-[protein] + ADP + H(+). It catalyses the reaction L-threonyl-[protein] + ATP = O-phospho-L-threonyl-[protein] + ADP + H(+). This chain is CDPK-related protein kinase (CRK), found in Daucus carota (Wild carrot).